The following is a 107-amino-acid chain: Probable monothiol glutaredoxin 2 (107 aa).

The 101-residue stretch at 7–107 (LEFIQNAIKK…LEKMLKDVVV (101 aa)) folds into the Glutaredoxin domain. Lys24 is a binding site for glutathione. Cys32 lines the [2Fe-2S] cluster pocket. Residues Arg61, Phe73, and 86 to 87 (CD) each bind glutathione.

The protein belongs to the glutaredoxin family. Monothiol subfamily.

The sequence is that of Probable monothiol glutaredoxin 2 (grxC2) from Rickettsia prowazekii (strain Madrid E).